A 438-amino-acid chain; its full sequence is High-affinity gluconate transporter (438 aa).

A run of 13 helical transmembrane segments spans residues 2–22 (PLVI…RFKM), 23–43 (NGFI…GMPL), 52–72 (AGVG…AMLG), 108–128 (VGFA…VFTI), 134–154 (IPLL…HGFL), 174–194 (TLLY…PVYA), 222–242 (FGVS…RAIA), 258–278 (FLGD…FTFG), 292–312 (LVSS…GGAF), 327–347 (SMMH…AAVL), 349–369 (IALG…APLI), 370–390 (ATTG…SVIF), and 418–438 (MLET…NMVI).

The protein belongs to the GntP permease family.

It is found in the cell inner membrane. It participates in carbohydrate acid metabolism; D-gluconate degradation. Its function is as follows. Part of the gluconate utilization system Gnt-I; high-affinity intake of gluconate. The polypeptide is High-affinity gluconate transporter (gntT) (Escherichia coli (strain K12)).